The primary structure comprises 396 residues: Probable sugar efflux transporter (396 aa).

The Cytoplasmic segment spans residues 1 to 14 (MTTNTVSRKVAWLR). The chain crosses the membrane as a helical span at residues 15-35 (VVTLAVAAFIFNTTEFVPVGL). Residues 36–49 (LSDIAQSFHMQTAQ) are Periplasmic-facing. Residues 50 to 70 (VGIMLTIYAWVVALMSLPFML) form a helical membrane-spanning segment. Over 71–80 (MTSQVERRKL) the chain is Cytoplasmic. The helical transmembrane segment at 81–101 (LICLFVVFIASHVLSFLSWSF) threads the bilayer. A topological domain (periplasmic) is located at residue T102. A helical membrane pass occupies residues 103 to 123 (VLVISRIGVAFAHAIFWSITA). Residues 124 to 135 (SLAIRMAPAGKR) lie on the Cytoplasmic side of the membrane. The chain crosses the membrane as a helical span at residues 136-156 (AQALSLIATGTALAMVLGLPL). Residues 157-169 (GRIVGQYFGWRMT) are Periplasmic-facing. The helical transmembrane segment at 170 to 190 (FFAIGIGALITLLCLIKLLPL) threads the bilayer. Topologically, residues 191–208 (LPSEHSGSLKSLPLLFRR) are cytoplasmic. A helical membrane pass occupies residues 209–229 (PALMSIYLLTVVVVTAHYTAY). The Periplasmic portion of the chain corresponds to 230–245 (SYIEPFVQNIAGFSAN). Residues 246–266 (FATALLLLLGGAGIIGSVIFG) traverse the membrane as a helical segment. Over 267–274 (KLGNQYAS) the chain is Cytoplasmic. The chain crosses the membrane as a helical span at residues 275-295 (ALVSTAIALLLVCLALLLPAA). Over 296–298 (NSE) the chain is Periplasmic. A helical membrane pass occupies residues 299 to 319 (IHLGVLSIFWGIAMMIIGLGM). Residues 320–332 (QVKVLALAPDATD) lie on the Cytoplasmic side of the membrane. A helical membrane pass occupies residues 333–353 (VAMALFSGIFNIGIGAGALVG). Residues 354–363 (NQVSLHWSMS) are Periplasmic-facing. The helical transmembrane segment at 364-384 (MIGYVGTVPAFAALIWSIIIF) threads the bilayer. Over 385–396 (RRWPVTLEEQTQ) the chain is Cytoplasmic.

Belongs to the major facilitator superfamily. SotB (TC 2.A.1.2) family.

It localises to the cell inner membrane. In terms of biological role, involved in the efflux of sugars. The physiological role may be the reduction of the intracellular concentration of toxic sugars or sugar metabolites. This Escherichia coli O157:H7 protein is Probable sugar efflux transporter.